A 320-amino-acid chain; its full sequence is Cytosolic Fe-S cluster assembly factor NUBP1 (320 aa).

At Met1 the chain carries N-acetylmethionine. The [4Fe-4S] cluster site is built by Cys8, Cys22, Cys25, and Cys31. Gly62–Ser69 contacts ATP. 2 residues coordinate [4Fe-4S] cluster: Cys235 and Cys238.

This sequence belongs to the Mrp/NBP35 ATP-binding proteins family. NUBP1/NBP35 subfamily. In terms of assembly, heterotetramer of 2 NUBP1 and 2 NUBP2 chains. Interacts with KIFC1. Interacts with the BBS/CCT complex subunit CCT1. The cofactor is [4Fe-4S] cluster.

It is found in the cytoplasm. It localises to the nucleus. The protein localises to the cell projection. The protein resides in the cytoskeleton. Its subcellular location is the cilium axoneme. It is found in the cilium basal body. It localises to the microtubule organizing center. The protein localises to the centrosome. The protein resides in the centriole. Functionally, component of the cytosolic iron-sulfur (Fe/S) protein assembly (CIA) machinery. Required for maturation of extramitochondrial Fe-S proteins. The NUBP1-NUBP2 heterotetramer forms a Fe-S scaffold complex, mediating the de novo assembly of an Fe-S cluster and its transfer to target apoproteins. Implicated in the regulation of centrosome duplication. Negatively regulates cilium formation and structure. In Bos taurus (Bovine), this protein is Cytosolic Fe-S cluster assembly factor NUBP1.